We begin with the raw amino-acid sequence, 290 residues long: ATP synthase gamma chain (290 aa).

It belongs to the ATPase gamma chain family. As to quaternary structure, F-type ATPases have 2 components, CF(1) - the catalytic core - and CF(0) - the membrane proton channel. CF(1) has five subunits: alpha(3), beta(3), gamma(1), delta(1), epsilon(1). CF(0) has three main subunits: a, b and c.

Its subcellular location is the cell inner membrane. Produces ATP from ADP in the presence of a proton gradient across the membrane. The gamma chain is believed to be important in regulating ATPase activity and the flow of protons through the CF(0) complex. The chain is ATP synthase gamma chain from Anaeromyxobacter sp. (strain Fw109-5).